Consider the following 443-residue polypeptide: Ribulose bisphosphate carboxylase large chain (443 aa).

Residues Asn89 and Thr139 each coordinate substrate. Lys141 acts as the Proton acceptor in catalysis. Substrate is bound at residue Lys143. Mg(2+) is bound by residues Lys167, Asp169, and Glu170. Lys167 carries the N6-carboxylysine modification. His260 functions as the Proton acceptor in the catalytic mechanism. Arg261, His293, and Ser345 together coordinate substrate.

The protein belongs to the RuBisCO large chain family. Type I subfamily. As to quaternary structure, heterohexadecamer of 8 large chains and 8 small chains; disulfide-linked. The disulfide link is formed within the large subunit homodimers. The cofactor is Mg(2+). The disulfide bond which can form in the large chain dimeric partners within the hexadecamer appears to be associated with oxidative stress and protein turnover.

It localises to the plastid. The protein resides in the chloroplast. It catalyses the reaction 2 (2R)-3-phosphoglycerate + 2 H(+) = D-ribulose 1,5-bisphosphate + CO2 + H2O. It carries out the reaction D-ribulose 1,5-bisphosphate + O2 = 2-phosphoglycolate + (2R)-3-phosphoglycerate + 2 H(+). RuBisCO catalyzes two reactions: the carboxylation of D-ribulose 1,5-bisphosphate, the primary event in carbon dioxide fixation, as well as the oxidative fragmentation of the pentose substrate in the photorespiration process. Both reactions occur simultaneously and in competition at the same active site. The sequence is that of Ribulose bisphosphate carboxylase large chain from Verbena bonariensis (Argentinian vervain).